The chain runs to 136 residues: Mitochondrial pyruvate carrier 1-like protein (136 aa).

At 2 to 19 (ARMAVLWRKMRDNFQSKE) the chain is on the mitochondrial matrix side. Residues 20–42 (FREYVSSTHFWGPAFSWGLPLAA) traverse the membrane as a helical segment. At 43–51 (FKDMKASPE) the chain is on the mother cell cytoplasmic side. A helical transmembrane segment spans residues 52 to 74 (IISGRMTTALILYSAIFMRFAYR). Topologically, residues 75–136 (VQPRNLLLMA…PGSQPPKQAS (62 aa)) are mitochondrial matrix. A disordered region spans residues 111-136 (EAKARDPPATAAAATSPGSQPPKQAS). Positions 117-136 (PPATAAAATSPGSQPPKQAS) are enriched in low complexity.

This sequence belongs to the mitochondrial pyruvate carrier (MPC) (TC 2.A.105) family.

The protein localises to the mitochondrion inner membrane. It carries out the reaction pyruvate(out) + H(+)(out) = pyruvate(in) + H(+)(in). Its function is as follows. Mediates the uptake of pyruvate into mitochondria. In Homo sapiens (Human), this protein is Mitochondrial pyruvate carrier 1-like protein (MPC1L).